The sequence spans 197 residues: FMN-dependent NADH:quinone oxidoreductase 1 (197 aa).

FMN is bound by residues Ser-10, 16 to 18, 93 to 96, and 137 to 140; these read SQS, MYNF, and TRGG.

This sequence belongs to the azoreductase type 1 family. Homodimer. The cofactor is FMN.

The enzyme catalyses 2 a quinone + NADH + H(+) = 2 a 1,4-benzosemiquinone + NAD(+). The catalysed reaction is N,N-dimethyl-1,4-phenylenediamine + anthranilate + 2 NAD(+) = 2-(4-dimethylaminophenyl)diazenylbenzoate + 2 NADH + 2 H(+). Quinone reductase that provides resistance to thiol-specific stress caused by electrophilic quinones. Its function is as follows. Also exhibits azoreductase activity. Catalyzes the reductive cleavage of the azo bond in aromatic azo compounds to the corresponding amines. This is FMN-dependent NADH:quinone oxidoreductase 1 from Photobacterium profundum (strain SS9).